Reading from the N-terminus, the 146-residue chain is Hemoglobin subunit beta (146 aa).

Residues 2-146 (HWTAEEKQLI…VAHALARKYH (145 aa)) enclose the Globin domain. Heme b contacts are provided by histidine 63 and histidine 92.

Belongs to the globin family. As to quaternary structure, heterotetramer of two alpha chains and two beta chains. Red blood cells.

Its function is as follows. Involved in oxygen transport from the lung to the various peripheral tissues. In Aquila chrysaetos (Golden eagle), this protein is Hemoglobin subunit beta (HBB).